The sequence spans 784 residues: Endonuclease MutS2 (784 aa).

Position 335–342 (335–342 (GPNTGGKT)) interacts with ATP. The tract at residues 527 to 546 (ERSKKQAEEDEARAHSAREE) is disordered. Positions 709–784 (LDLRGERYED…GTGVTVVELK (76 aa)) constitute a Smr domain.

It belongs to the DNA mismatch repair MutS family. MutS2 subfamily. As to quaternary structure, homodimer. Binds to stalled ribosomes, contacting rRNA.

In terms of biological role, endonuclease that is involved in the suppression of homologous recombination and thus may have a key role in the control of bacterial genetic diversity. Acts as a ribosome collision sensor, splitting the ribosome into its 2 subunits. Detects stalled/collided 70S ribosomes which it binds and splits by an ATP-hydrolysis driven conformational change. Acts upstream of the ribosome quality control system (RQC), a ribosome-associated complex that mediates the extraction of incompletely synthesized nascent chains from stalled ribosomes and their subsequent degradation. Probably generates substrates for RQC. The chain is Endonuclease MutS2 from Geobacillus thermodenitrificans (strain NG80-2).